Consider the following 171-residue polypeptide: 3-hydroxydecanoyl-[acyl-carrier-protein] dehydratase (171 aa).

His70 is a catalytic residue.

This sequence belongs to the thioester dehydratase family. FabA subfamily. Homodimer.

It localises to the cytoplasm. The enzyme catalyses a (3R)-hydroxyacyl-[ACP] = a (2E)-enoyl-[ACP] + H2O. The catalysed reaction is (3R)-hydroxydecanoyl-[ACP] = (2E)-decenoyl-[ACP] + H2O. It carries out the reaction (2E)-decenoyl-[ACP] = (3Z)-decenoyl-[ACP]. Its pathway is lipid metabolism; fatty acid biosynthesis. Necessary for the introduction of cis unsaturation into fatty acids. Catalyzes the dehydration of (3R)-3-hydroxydecanoyl-ACP to E-(2)-decenoyl-ACP and then its isomerization to Z-(3)-decenoyl-ACP. Can catalyze the dehydratase reaction for beta-hydroxyacyl-ACPs with saturated chain lengths up to 16:0, being most active on intermediate chain length. This is 3-hydroxydecanoyl-[acyl-carrier-protein] dehydratase from Marinomonas sp. (strain MWYL1).